The sequence spans 1596 residues: Protein son of sevenless (1596 aa).

In terms of domain architecture, DH spans 248-434 (TYEETVKELI…HPLHCDLEKV (187 aa)). The 109-residue stretch at 480-588 (EFIREDSLSK…WMADLLMVIT (109 aa)) folds into the PH domain. Positions 637–792 (GVPMIKGATL…SVLKIVQRKN (156 aa)) constitute an N-terminal Ras-GEF domain. Positions 829–1066 (HPLELARQLT…YNESLRIEPR (238 aa)) constitute a Ras-GEF domain. 5 disordered regions span residues 1073–1105 (KFPR…LSNS), 1175–1212 (RNTS…AHVW), 1235–1291 (EHLP…TAST), 1340–1392 (RAVP…NHST), and 1465–1596 (PLPI…TNEE). Over residues 1096 to 1105 (TNSSSKLSNS) the composition is skewed to low complexity. Polar residues-rich tracts occupy residues 1175 to 1195 (RNTS…NNGE) and 1280 to 1291 (MQNSPTHSTAST). A compositionally biased stretch (basic and acidic residues) spans 1352–1366 (ERTESCADMAQKRQA). The span at 1469-1489 (SPAASSSTTTSPLTPAMSPMS) shows a compositional bias: low complexity. The segment covering 1526 to 1542 (HHQHHATHLPHHPHQHH) has biased composition (basic residues). Phosphoserine occurs at positions 1550 and 1551.

As to quaternary structure, may form a complex with sevenless and DRK.

Its function is as follows. Promotes the exchange of Ras-bound GDP by GTP. Functions in signaling pathways initiated by the sevenless and epidermal growth factor receptor tyrosine kinases; implies a role for the ras pathway in neuronal development. This chain is Protein son of sevenless (Sos), found in Drosophila melanogaster (Fruit fly).